Reading from the N-terminus, the 189-residue chain is MATANKNLSNYDKNTIPNAKNFRFGIVISEWNDHITEGLYSGVIEALTDCGALHKNIIRWNVPGSFELIYGAKKMIETQKPDVVITIGCVIKGETMHFEFVCEGVTQGIKDLNVLSDIPTIFCLLTDNTEQQSIDRSGGTHGNKGTEAAIAAIKMAYLREQANLGFHQSDKLLKTNQLQIEGLPLKIQE.

Residues Trp31, 65-67 (SFE), and 89-91 (CVI) each bind 5-amino-6-(D-ribitylamino)uracil. 94–95 (ET) provides a ligand contact to (2S)-2-hydroxy-3-oxobutyl phosphate. Catalysis depends on His97, which acts as the Proton donor. Phe122 contributes to the 5-amino-6-(D-ribitylamino)uracil binding site. Residue Arg136 coordinates (2S)-2-hydroxy-3-oxobutyl phosphate.

Belongs to the DMRL synthase family.

It catalyses the reaction (2S)-2-hydroxy-3-oxobutyl phosphate + 5-amino-6-(D-ribitylamino)uracil = 6,7-dimethyl-8-(1-D-ribityl)lumazine + phosphate + 2 H2O + H(+). It participates in cofactor biosynthesis; riboflavin biosynthesis; riboflavin from 2-hydroxy-3-oxobutyl phosphate and 5-amino-6-(D-ribitylamino)uracil: step 1/2. In terms of biological role, catalyzes the formation of 6,7-dimethyl-8-ribityllumazine by condensation of 5-amino-6-(D-ribitylamino)uracil with 3,4-dihydroxy-2-butanone 4-phosphate. This is the penultimate step in the biosynthesis of riboflavin. In Flavobacterium psychrophilum (strain ATCC 49511 / DSM 21280 / CIP 103535 / JIP02/86), this protein is 6,7-dimethyl-8-ribityllumazine synthase.